Reading from the N-terminus, the 73-residue chain is Cell division protein ZapB (73 aa).

Positions L3 to G67 form a coiled coil.

This sequence belongs to the ZapB family. Homodimer. The ends of the coiled-coil dimer bind to each other, forming polymers. Interacts with FtsZ.

The protein localises to the cytoplasm. In terms of biological role, non-essential, abundant cell division factor that is required for proper Z-ring formation. It is recruited early to the divisome by direct interaction with FtsZ, stimulating Z-ring assembly and thereby promoting cell division earlier in the cell cycle. Its recruitment to the Z-ring requires functional FtsA or ZipA. The polypeptide is Cell division protein ZapB (Shewanella sp. (strain MR-4)).